A 156-amino-acid chain; its full sequence is Ribosomal RNA large subunit methyltransferase H (156 aa).

S-adenosyl-L-methionine contacts are provided by residues Leu73, Gly104, and 123-128; that span reads LSPLTL.

It belongs to the RNA methyltransferase RlmH family. As to quaternary structure, homodimer.

It localises to the cytoplasm. The catalysed reaction is pseudouridine(1915) in 23S rRNA + S-adenosyl-L-methionine = N(3)-methylpseudouridine(1915) in 23S rRNA + S-adenosyl-L-homocysteine + H(+). In terms of biological role, specifically methylates the pseudouridine at position 1915 (m3Psi1915) in 23S rRNA. The chain is Ribosomal RNA large subunit methyltransferase H from Aliivibrio salmonicida (strain LFI1238) (Vibrio salmonicida (strain LFI1238)).